Here is a 156-residue protein sequence, read N- to C-terminus: Translationally controlled tumor protein 2 (156 aa).

The 156-residue stretch at 1-156 folds into the TCTP domain; the sequence is MLVYQDILTG…LAYGLKEIKC (156 aa).

This sequence belongs to the TCTP family. As to expression, expressed in stems, cauline leaves, minor veins of rosette leaves, roots, lateral root primordia, vascular tissues of petioles and inflorescences, base of siliques, papillae and ovules. Not detected in root meristems, anthers or seeds. Expressed in stomata, trichomes and root cortex.

The protein resides in the nucleus. It is found in the cytoplasm. Functionally, regulates proliferation. Induces whole plant regeneration when expressed in heterologous systems. Involved in root growth and lateral root development, with a probable role in cell reprogramming. The long-distance transport of TCTP RNA and/or protein in plants may have an important role in regulation of growth and development. The sequence is that of Translationally controlled tumor protein 2 from Arabidopsis thaliana (Mouse-ear cress).